Here is a 291-residue protein sequence, read N- to C-terminus: Methionine aminopeptidase (291 aa).

H118 is a binding site for substrate. 3 residues coordinate a divalent metal cation: D135, D146, and H209. A substrate-binding site is contributed by H216. Residues E241 and E273 each contribute to the a divalent metal cation site.

It belongs to the peptidase M24A family. Methionine aminopeptidase type 1 subfamily. As to quaternary structure, monomer. The cofactor is Co(2+). Zn(2+) serves as cofactor. Requires Mn(2+) as cofactor. It depends on Fe(2+) as a cofactor.

It carries out the reaction Release of N-terminal amino acids, preferentially methionine, from peptides and arylamides.. In terms of biological role, removes the N-terminal methionine from nascent proteins. The N-terminal methionine is often cleaved when the second residue in the primary sequence is small and uncharged (Met-Ala-, Cys, Gly, Pro, Ser, Thr, or Val). Requires deformylation of the N(alpha)-formylated initiator methionine before it can be hydrolyzed. The chain is Methionine aminopeptidase from Chlamydia pneumoniae (Chlamydophila pneumoniae).